Consider the following 571-residue polypeptide: Urease subunit alpha (571 aa).

The region spanning 134-571 (GAIDTHIHFI…LPMAQRYFLF (438 aa)) is the Urease domain. Positions 139, 141, and 222 each coordinate Ni(2+). Position 222 is an N6-carboxylysine (Lys-222). Position 224 (His-224) interacts with substrate. Ni(2+) is bound by residues His-251 and His-277. His-325 acts as the Proton donor in catalysis. Asp-365 contacts Ni(2+).

Belongs to the metallo-dependent hydrolases superfamily. Urease alpha subunit family. In terms of assembly, heterotrimer of UreA (gamma), UreB (beta) and UreC (alpha) subunits. Three heterotrimers associate to form the active enzyme. Ni cation serves as cofactor. In terms of processing, carboxylation allows a single lysine to coordinate two nickel ions.

Its subcellular location is the cytoplasm. The catalysed reaction is urea + 2 H2O + H(+) = hydrogencarbonate + 2 NH4(+). The protein operates within nitrogen metabolism; urea degradation; CO(2) and NH(3) from urea (urease route): step 1/1. The chain is Urease subunit alpha from Bordetella bronchiseptica (strain ATCC BAA-588 / NCTC 13252 / RB50) (Alcaligenes bronchisepticus).